The sequence spans 283 residues: F-box only protein 27 (283 aa).

Residues 1-23 are disordered; it reads MGASVSRGRAARVPAPEPEPEEA. Positions 23–70 constitute an F-box domain; sequence ALDLSQLPPELLLVVLSHVPPRTLLGRCRQVCRGWRALVDGQALWLLI. Residues 104 to 280 enclose the FBA domain; it reads FCARRPIGRN…VTNSSVIVRV (177 aa).

As to quaternary structure, part of a SCF (SKP1-cullin-F-box) protein ligase complex. Interacts with SKP1 and CUL1. In terms of tissue distribution, predominantly expressed in brain, heart and kidney. Expressed at lower levels in liver and lung.

In terms of biological role, substrate-recognition component of the SCF (SKP1-CUL1-F-box protein)-type E3 ubiquitin ligase complex. Able to recognize and bind denatured glycoproteins, which are modified with complex-type oligosaccharides. The sequence is that of F-box only protein 27 (FBXO27) from Homo sapiens (Human).